We begin with the raw amino-acid sequence, 147 residues long: Ubiquitin-conjugating enzyme E2 D2 (147 aa).

The UBC core domain occupies 1 to 147 (MALKRIHKEL…AREWTQKYAM (147 aa)). The active-site Glycyl thioester intermediate is the cysteine 85.

It belongs to the ubiquitin-conjugating enzyme family. Interacts with SCF (SKP1-CUL1-F-box protein) E3 ubiquitin ligase complex. Interacts with CNOT4 (via RING domain). Interacts with E3 ubiquitin-protein ligases CBLC, PJA1 and PJA2. Interacts with PDZRN3. Interacts with PPP1R11. Interacts with E3 ubiquitin-protein ligase PHF7; the interaction inhibits cleavage of PHF7 and promotes association of the complex with the nucleosome core particle.

The enzyme catalyses S-ubiquitinyl-[E1 ubiquitin-activating enzyme]-L-cysteine + [E2 ubiquitin-conjugating enzyme]-L-cysteine = [E1 ubiquitin-activating enzyme]-L-cysteine + S-ubiquitinyl-[E2 ubiquitin-conjugating enzyme]-L-cysteine.. It catalyses the reaction S-ubiquitinyl-[E1 ubiquitin-activating enzyme]-L-cysteine + [acceptor protein]-L-lysine = [E1 ubiquitin-activating enzyme]-L-cysteine + N(6)-monoubiquitinyl-[acceptor protein]-L-lysine.. It participates in protein modification; protein ubiquitination. Its function is as follows. Accepts ubiquitin from the E1 complex and catalyzes its covalent attachment to other proteins. In vitro catalyzes 'Lys-48'-linked polyubiquitination. Mediates the selective degradation of short-lived and abnormal proteins. Functions in the E6/E6-AP-induced ubiquitination of p53/TP53. Mediates ubiquitination of PEX5 and SQSTM1 and autoubiquitination of STUB1 and TRAF6. Involved in the signal-induced conjugation and subsequent degradation of NFKBIA, FBXW2-mediated GCM1 ubiquitination and degradation, MDM2-dependent degradation of p53/TP53 and the activation of MAVS in the mitochondria by RIGI in response to viral infection. Essential for viral activation of IRF3. This Bos taurus (Bovine) protein is Ubiquitin-conjugating enzyme E2 D2 (UBE2D2).